The chain runs to 287 residues: Diaminopimelate epimerase (287 aa).

Residues N15 and N66 each coordinate substrate. The active-site Proton donor is C75. Substrate is bound by residues G76–N77, N170, N203, and E221–R222. The Proton acceptor role is filled by C230. G231–T232 is a substrate binding site.

The protein belongs to the diaminopimelate epimerase family. In terms of assembly, homodimer.

It is found in the cytoplasm. The enzyme catalyses (2S,6S)-2,6-diaminopimelate = meso-2,6-diaminopimelate. Its pathway is amino-acid biosynthesis; L-lysine biosynthesis via DAP pathway; DL-2,6-diaminopimelate from LL-2,6-diaminopimelate: step 1/1. In terms of biological role, catalyzes the stereoinversion of LL-2,6-diaminopimelate (L,L-DAP) to meso-diaminopimelate (meso-DAP), a precursor of L-lysine and an essential component of the bacterial peptidoglycan. The sequence is that of Diaminopimelate epimerase from Desulfovibrio desulfuricans (strain ATCC 27774 / DSM 6949 / MB).